Consider the following 387-residue polypeptide: Diels-Alderase ORF3 (387 aa).

It belongs to the Diels-Alderase family.

The protein operates within secondary metabolite biosynthesis. Diels-Alderase; part of the gene cluster that mediates the biosynthesis of a tyrosine-derived cytochalasan acting as a fungal signal recognized by resistant rice plants and leads to avirulence in Pi33 resistant rice cultivars. The first step in the pathway is catalyzed by the hybrid PKS-NRPS ACE1, assisted by the enoyl reductase RAP1, that are responsible for fusion of the tyrosine precursor and the polyketide backbone. The polyketide synthase module (PKS) of ACE1 is responsible for the synthesis of the polyketide backbone and the downstream nonribosomal peptide synthetase (NRPS) amidates the carboxyl end of the polyketide with the tyrosine precursor. Because ACE1 lacks a designated enoylreductase (ER) domain, the required activity is provided the enoyl reductase RAP1. Reduction by the hydrolyase ORFZ, followed by dehydration and intra-molecular Diels-Alder cyclization by the Diels-Alderase ORF3 then yield the required isoindolone-fused macrocycle. A number of oxidative steps catalyzed by the tailoring enzymes identified within the cluster, including cytochrome P450 monooxygenases CYP1 to CYP4, the FAD-linked oxidoreductase OXR2 and the short-chain dehydrogenase/reductase OXR1, are further required to afford the final cytochalasans that confer avirulence and which have still to be identified. The monooxygenase CYP1 has been shown to be a site-selective C-18 hydroxylase whereas the function of CYP3 is the site-selective epoxidation of the C-6/C-7 olefin that is present in some intermediate compounds. Finally, SYN2 and RAP2 are not required for avirulence in Pi33 resistant rice cultivars. The chain is Diels-Alderase ORF3 from Pyricularia oryzae (strain 70-15 / ATCC MYA-4617 / FGSC 8958) (Rice blast fungus).